Here is a 364-residue protein sequence, read N- to C-terminus: Peptide chain release factor 2 (364 aa).

Q252 is subject to N5-methylglutamine.

This sequence belongs to the prokaryotic/mitochondrial release factor family. In terms of processing, methylated by PrmC. Methylation increases the termination efficiency of RF2.

Its subcellular location is the cytoplasm. Its function is as follows. Peptide chain release factor 2 directs the termination of translation in response to the peptide chain termination codons UGA and UAA. The chain is Peptide chain release factor 2 from Clostridium perfringens (strain SM101 / Type A).